Here is a 197-residue protein sequence, read N- to C-terminus: Double homeobox protein 5 (197 aa).

2 DNA-binding regions (homeobox) span residues 46–105 and 121–180; these read GRRM…LRQH and GRRK…RGQS. Residues 101 to 127 are disordered; sequence QLRQHRRQSRPWPGRRDPQKGRRKRTA.

It belongs to the paired homeobox family. As to expression, expressed in hepatoma Hep3B cells.

The protein localises to the nucleus. The polypeptide is Double homeobox protein 5 (DUX5) (Homo sapiens (Human)).